The chain runs to 1137 residues: Protein sel-1 homolog 3 (1137 aa).

Residues 1 to 42 (MQWRGAGLWWPRRRQQQQQQQPPPPAFGPPAAAMVPPSRGVS) are disordered. Residues Asn206 and Asn387 are each glycosylated (N-linked (GlcNAc...) asparagine). Sel1-like repeat units lie at residues 575–609 (HKAS…GQGS), 611–647 (RLSS…TKTP), 694–730 (AAAQ…LETE), 732–767 (PALI…SKGL), 768–800 (HQAV…EMGN), 801–839 (PDAS…QGGH), and 840–877 (IEGT…EKNG). Ser613 is modified (phosphoserine). The N-linked (GlcNAc...) asparagine glycan is linked to Asn942. A Sel1-like 8 repeat occupies 952-988 (SFAYLKMGDLYYYGHQNQSQDLELSVQMYAQAALDGD). A helical transmembrane segment spans residues 1067–1087 (LIYFLGTFLLSVVIAWMVLYL). The tract at residues 1100–1137 (AWVSADPTSSTPSPAVPPAADASDHDPPMMANGPEPRG) is disordered. Over residues 1102–1120 (VSADPTSSTPSPAVPPAAD) the composition is skewed to low complexity.

The protein resides in the membrane. In Mus musculus (Mouse), this protein is Protein sel-1 homolog 3 (Sel1l3).